The primary structure comprises 119 residues: Autophagy-related protein 8B (119 aa).

Gly-117 carries Phosphatidylethanolamine amidated glycine lipidation. A propeptide spans Leu-118–Leu-119 (removed in mature form).

Belongs to the ATG8 family. Interacts with ATG4. The C-terminal 2 residues are removed by ATG4 to expose Gly-117 at the C-terminus. The C-terminal Gly is then amidated with phosphatidylethanolamine by an activating system similar to that for ubiquitin.

The protein localises to the cytoplasmic vesicle. The protein resides in the autophagosome membrane. It is found in the vacuole membrane. Its subcellular location is the cytoplasm. It localises to the cytoskeleton. In terms of biological role, ubiquitin-like modifier involved in autophagosomes formation. May mediate the delivery of the autophagosomes to the vacuole via the microtubule cytoskeleton. The protein is Autophagy-related protein 8B (ATG8B) of Oryza sativa subsp. indica (Rice).